We begin with the raw amino-acid sequence, 63 residues long: Large ribosomal subunit protein bL28 (63 aa).

Belongs to the bacterial ribosomal protein bL28 family.

This chain is Large ribosomal subunit protein bL28, found in Citrifermentans bemidjiense (strain ATCC BAA-1014 / DSM 16622 / JCM 12645 / Bem) (Geobacter bemidjiensis).